A 54-amino-acid polypeptide reads, in one-letter code: Conotoxin vc5a (54 aa).

An N-terminal signal peptide occupies residues 1–14 (VILLLITSTPSVDA). The propeptide occupies 15–42 (RLKAKDNMPLASFHDNAKRTLQTRLINT). At proline 49 the chain carries 4-hydroxyproline. Residue isoleucine 53 is modified to Isoleucine amide.

This sequence belongs to the conotoxin T superfamily. Post-translationally, contains 2 disulfide bonds that can be either 'C1-C3, C2-C4' or 'C1-C4, C2-C3', since these disulfide connectivities have been observed for conotoxins with cysteine framework V (for examples, see AC P0DQQ7 and AC P81755). Expressed by the venom duct.

Its subcellular location is the secreted. The chain is Conotoxin vc5a from Conus victoriae (Queen Victoria cone).